The primary structure comprises 102 residues: Large ribosomal subunit protein bL28 (102 aa).

Over residues 1 to 20 the composition is skewed to polar residues; the sequence is MSNSCDLTGHGWQNGNMVSH. The segment at 1 to 27 is disordered; that stretch reads MSNSCDLTGHGWQNGNMVSHSNRKTKK.

This sequence belongs to the bacterial ribosomal protein bL28 family.

This chain is Large ribosomal subunit protein bL28, found in Neorickettsia sennetsu (strain ATCC VR-367 / Miyayama) (Ehrlichia sennetsu).